We begin with the raw amino-acid sequence, 752 residues long: Photosystem I P700 chlorophyll a apoprotein A1 (752 aa).

Transmembrane regions (helical) follow at residues 73 to 96 (IFSA…FHGA), 159 to 182 (LYWI…FHYH), 198 to 222 (MNHH…HIAL), 294 to 312 (IAHH…GHMY), 349 to 372 (WHAQ…HHMY), 388 to 414 (LSLF…IFMV), 436 to 458 (AIIS…LYIH), and 533 to 551 (FMVH…LILL). [4Fe-4S] cluster contacts are provided by cysteine 575 and cysteine 584. 2 helical membrane-spanning segments follow: residues 591–612 (HVFL…HFSW) and 666–688 (SSAY…MFLF). Histidine 677 contributes to the chlorophyll a' binding site. Positions 685 and 693 each coordinate chlorophyll a. A phylloquinone-binding site is contributed by tryptophan 694. A helical transmembrane segment spans residues 726–746 (AVGLAHYLLGGIGTTWSFFLA).

It belongs to the PsaA/PsaB family. The PsaA/B heterodimer binds the P700 chlorophyll special pair and subsequent electron acceptors. PSI consists of a core antenna complex that captures photons, and an electron transfer chain that converts photonic excitation into a charge separation. The eukaryotic PSI reaction center is composed of at least 11 subunits. The cofactor is P700 is a chlorophyll a/chlorophyll a' dimer, A0 is one or more chlorophyll a, A1 is one or both phylloquinones and FX is a shared 4Fe-4S iron-sulfur center..

It localises to the plastid. The protein localises to the chloroplast thylakoid membrane. The catalysed reaction is reduced [plastocyanin] + hnu + oxidized [2Fe-2S]-[ferredoxin] = oxidized [plastocyanin] + reduced [2Fe-2S]-[ferredoxin]. PsaA and PsaB bind P700, the primary electron donor of photosystem I (PSI), as well as the electron acceptors A0, A1 and FX. PSI is a plastocyanin/cytochrome c6-ferredoxin oxidoreductase, converting photonic excitation into a charge separation, which transfers an electron from the donor P700 chlorophyll pair to the spectroscopically characterized acceptors A0, A1, FX, FA and FB in turn. Oxidized P700 is reduced on the lumenal side of the thylakoid membrane by plastocyanin or cytochrome c6. The chain is Photosystem I P700 chlorophyll a apoprotein A1 from Trieres chinensis (Marine centric diatom).